Here is a 38-residue protein sequence, read N- to C-terminus: Phospholipase A2 1 (38 aa).

Tyr-28, Gly-30, and Gly-32 together coordinate Ca(2+).

The protein belongs to the phospholipase A2 family. Group I subfamily. Ca(2+) serves as cofactor. As to expression, expressed by the venom gland.

The protein resides in the secreted. The catalysed reaction is a 1,2-diacyl-sn-glycero-3-phosphocholine + H2O = a 1-acyl-sn-glycero-3-phosphocholine + a fatty acid + H(+). In terms of biological role, snake venom phospholipase A2 (PLA2) that inhibits neuromuscular transmission by blocking acetylcholine release from the nerve termini. PLA2 catalyzes the calcium-dependent hydrolysis of the 2-acyl groups in 3-sn-phosphoglycerides. The protein is Phospholipase A2 1 of Calliophis bivirgatus (Blue Malaysian coral snake).